Reading from the N-terminus, the 809-residue chain is Protein TRC8 homolog (809 aa).

A run of 11 helical transmembrane segments spans residues Thr-124–Trp-144, His-147–Ser-167, Val-200–Ile-220, Met-233–Val-253, Leu-256–Ala-276, Leu-350–Phe-370, Leu-392–Leu-412, Leu-425–Met-445, Ala-461–Ser-481, Trp-488–Ala-508, and Ser-539–Glu-559. An RING-type; atypical zinc finger spans residues Cys-621–His-659. Disordered regions lie at residues Asn-696–Ala-724 and Val-752–Ala-788. Positions Glu-711–Ala-724 are enriched in low complexity.

Interacts with VHL. Interacts with the MPN domain of CSN5. Interacts with EIF3F and EIF3H.

Its subcellular location is the endoplasmic reticulum membrane. In terms of biological role, plays a role in growth inhibition that is dependent upon COP9 signalosome subunits CSN5 and CSN6. May modulate signalosome levels or compartmentalization. Probably functions in the same or a related pathway to VHL during early midline development. The sequence is that of Protein TRC8 homolog from Drosophila melanogaster (Fruit fly).